The following is a 105-amino-acid chain: ATP synthase F(0) complex subunit a (105 aa).

Helical transmembrane passes span 14-34, 47-67, and 72-92; these read EGTP…SLFI, LTAG…LLPM, and AILT…VAMI.

This sequence belongs to the ATPase A chain family. Component of the ATP synthase complex composed at least of ATP5F1A/subunit alpha, ATP5F1B/subunit beta, ATP5MC1/subunit c (homooctomer), MT-ATP6/subunit a, MT-ATP8/subunit 8, ATP5ME/subunit e, ATP5MF/subunit f, ATP5MG/subunit g, ATP5MK/subunit k, ATP5MJ/subunit j, ATP5F1C/subunit gamma, ATP5F1D/subunit delta, ATP5F1E/subunit epsilon, ATP5PF/subunit F6, ATP5PB/subunit b, ATP5PD/subunit d, ATP5PO/subunit OSCP. ATP synthase complex consists of a soluble F(1) head domain (subunits alpha(3) and beta(3)) - the catalytic core - and a membrane F(0) domain - the membrane proton channel (subunits c, a, 8, e, f, g, k and j). These two domains are linked by a central stalk (subunits gamma, delta, and epsilon) rotating inside the F1 region and a stationary peripheral stalk (subunits F6, b, d, and OSCP). Interacts with DNAJC30; interaction is direct.

It localises to the mitochondrion inner membrane. It carries out the reaction H(+)(in) = H(+)(out). Its function is as follows. Subunit a, of the mitochondrial membrane ATP synthase complex (F(1)F(0) ATP synthase or Complex V) that produces ATP from ADP in the presence of a proton gradient across the membrane which is generated by electron transport complexes of the respiratory chain. ATP synthase complex consist of a soluble F(1) head domain - the catalytic core - and a membrane F(1) domain - the membrane proton channel. These two domains are linked by a central stalk rotating inside the F(1) region and a stationary peripheral stalk. During catalysis, ATP synthesis in the catalytic domain of F(1) is coupled via a rotary mechanism of the central stalk subunits to proton translocation. With the subunit c (ATP5MC1), forms the proton-conducting channel in the F(0) domain, that contains two crucial half-channels (inlet and outlet) that facilitate proton movement from the mitochondrial intermembrane space (IMS) into the matrix. Protons are taken up via the inlet half-channel and released through the outlet half-channel, following a Grotthuss mechanism. This Salmo trutta (Brown trout) protein is ATP synthase F(0) complex subunit a.